We begin with the raw amino-acid sequence, 142 residues long: MVRRRHDGRGSDDRPTVRGGARVNIALVLLGGMLGAPVRYLIDRAVTARIDSPLPLGTLTVNIVGSAVLGGLIGASANGWLLTAAGTGFCGALTTFSTFGYETIRLVTDGAYGYALGNVVISVAASVGAVYAAVSLTNWVTP.

Helical transmembrane passes span 23 to 43, 54 to 74, 79 to 99, and 116 to 136; these read VNIA…YLID, LPLG…GLIG, GWLL…FSTF, and LGNV…AVSL. Positions 91 and 94 each coordinate Na(+).

This sequence belongs to the fluoride channel Fluc/FEX (TC 1.A.43) family.

Its subcellular location is the cell membrane. It catalyses the reaction fluoride(in) = fluoride(out). Na(+) is not transported, but it plays an essential structural role and its presence is essential for fluoride channel function. Functionally, fluoride-specific ion channel. Important for reducing fluoride concentration in the cell, thus reducing its toxicity. In Nocardia farcinica (strain IFM 10152), this protein is Fluoride-specific ion channel FluC 1.